Consider the following 105-residue polypeptide: Heat shock protein HspQ (105 aa).

Residues 84–105 (QPKLDELSASIKKQLKTPRLRN) are disordered. Over residues 96–105 (KQLKTPRLRN) the composition is skewed to basic residues.

Belongs to the HspQ family.

It localises to the cytoplasm. Functionally, involved in the degradation of certain denaturated proteins, including DnaA, during heat shock stress. The protein is Heat shock protein HspQ of Wigglesworthia glossinidia brevipalpis.